The primary structure comprises 127 residues: Cytochrome b-c1 complex subunit 7, mitochondrial (127 aa).

It belongs to the UQCRB/QCR7 family. Component of the ubiquinol-cytochrome c oxidoreductase (cytochrome b-c1 complex, complex III, CIII), a multisubunit enzyme composed of 10 subunits. The complex is composed of 3 respiratory subunits cytochrome b (COB), cytochrome c1 (CYT1) and Rieske protein (RIP1), 2 core protein subunits COR1 and QCR2, and 5 low-molecular weight protein subunits QCR6, QCR7, QCR8, QCR9 and QCR10. The complex exists as an obligatory dimer and forms supercomplexes (SCs) in the inner mitochondrial membrane with a monomer or a dimer of cytochrome c oxidase (complex IV, CIV), resulting in 2 different assemblies (supercomplexes III(2)IV and III(2)IV(2)).

It is found in the mitochondrion inner membrane. Functionally, component of the ubiquinol-cytochrome c oxidoreductase, a multisubunit transmembrane complex that is part of the mitochondrial electron transport chain which drives oxidative phosphorylation. Plays an important role in the uptake of multiple carbon sources such acetate, lactate, amino acids or GlcNAc present in different host niches. The sequence is that of Cytochrome b-c1 complex subunit 7, mitochondrial from Candida albicans (strain SC5314 / ATCC MYA-2876) (Yeast).